A 538-amino-acid chain; its full sequence is Fructooligosaccharide ABC transporter substrate-binding protein FusA (538 aa).

Positions 1-22 (MKFKTFSKSAVLLTASLAVLAA) are cleaved as a signal peptide. Residue cysteine 23 is the site of N-palmitoyl cysteine attachment. Cysteine 23 carries S-diacylglycerol cysteine lipidation. Glutamate 167 contacts substrate. Residues aspartate 215, asparagine 217, asparagine 219, glutamate 221, aspartate 223, and glutamate 224 each coordinate Ca(2+). Asparagine 235 lines the substrate pocket. Ca(2+) contacts are provided by aspartate 263, phenylalanine 264, aspartate 267, and asparagine 268. 6 residues coordinate substrate: tryptophan 314, asparagine 318, lysine 353, tryptophan 384, arginine 419, and glutamate 423.

Belongs to the bacterial solute-binding protein 1 family. As to quaternary structure, the complex is composed of two ATP-binding proteins (MsmK), two transmembrane proteins (FusB and FusC) and a solute-binding protein (FusA).

The protein resides in the cell membrane. Its function is as follows. Part of the ABC transporter complex FusABC-MsmK involved in short- and long-chain fructooligosaccharide (FOS) import. Required for the utilization of long-chain FOSs. Binds kestose, nystose, fructofuranosyl-nystose and inulin, but not sucrose. Has a preference for long-chain FOSs (tetrasaccharides and larger). The protein is Fructooligosaccharide ABC transporter substrate-binding protein FusA of Streptococcus pneumoniae serotype 4 (strain ATCC BAA-334 / TIGR4).